The sequence spans 490 residues: MTQWEVVIGLETHAQLSTVSKIFSGASTQFGAQPNTQACPVDLALPGVLPVLNRGAVERAIRFGLAIGATVAPRSVFARKNYFYPDLPKGYQISQYEIPVVQGGQITIQVPANEKAGKQAYSKTVNLTRAHLEEDAGKSLHEDFAGMTGIDLNRAGTPLLEIVTEPEMRSAAEAVAYAKALHGLVMWLGICDGNMQEGSFRCDANVSVRPVGQEKFGTRAEIKNLNSFRFLEDAINYEVRRQIELIEDGGEVVQETRLYDPDKRETRSMRSKEDAHDYRYFPDPDLMPLVIGADWIARVKGEMPELPAAMQQRFIEQYGVSAYDAGVLTSTKAMAEYFEALVAKAGAANAKLAANWLMGDVSSQLNRDGIDIDACPVSAAQLALVLQRIADGTISNKIAKEIFVTIWDEKAADEGAADRIIEAKGLKQISDTGALEAIIDEVLAANAKSVEEFRAGKDKAFNALVGQAMKATKGKANPQQVNELLKKKLG.

This sequence belongs to the GatB/GatE family. GatB subfamily. As to quaternary structure, heterotrimer of A, B and C subunits.

It carries out the reaction L-glutamyl-tRNA(Gln) + L-glutamine + ATP + H2O = L-glutaminyl-tRNA(Gln) + L-glutamate + ADP + phosphate + H(+). The enzyme catalyses L-aspartyl-tRNA(Asn) + L-glutamine + ATP + H2O = L-asparaginyl-tRNA(Asn) + L-glutamate + ADP + phosphate + 2 H(+). In terms of biological role, allows the formation of correctly charged Asn-tRNA(Asn) or Gln-tRNA(Gln) through the transamidation of misacylated Asp-tRNA(Asn) or Glu-tRNA(Gln) in organisms which lack either or both of asparaginyl-tRNA or glutaminyl-tRNA synthetases. The reaction takes place in the presence of glutamine and ATP through an activated phospho-Asp-tRNA(Asn) or phospho-Glu-tRNA(Gln). This Burkholderia pseudomallei (strain K96243) protein is Aspartyl/glutamyl-tRNA(Asn/Gln) amidotransferase subunit B.